A 336-amino-acid polypeptide reads, in one-letter code: Sulfate/thiosulfate import ATP-binding protein CysA (336 aa).

The ABC transporter domain maps to 3-233; sequence ITIENVSKSF…PASPFVMSFI (231 aa). Residue 35–42 coordinates ATP; it reads GPSGSGKS.

The protein belongs to the ABC transporter superfamily. Sulfate/tungstate importer (TC 3.A.1.6) family. As to quaternary structure, the complex is composed of two ATP-binding proteins (CysA), two transmembrane proteins (CysT and CysW) and a solute-binding protein (CysP).

It is found in the cell inner membrane. The enzyme catalyses sulfate(out) + ATP + H2O = sulfate(in) + ADP + phosphate + H(+). It carries out the reaction thiosulfate(out) + ATP + H2O = thiosulfate(in) + ADP + phosphate + H(+). Its function is as follows. Part of the ABC transporter complex CysAWTP involved in sulfate/thiosulfate import. Responsible for energy coupling to the transport system. This is Sulfate/thiosulfate import ATP-binding protein CysA from Thermosynechococcus vestitus (strain NIES-2133 / IAM M-273 / BP-1).